The primary structure comprises 481 residues: UDP-glycosyltransferase 72E2 (481 aa).

His18 (proton acceptor) is an active-site residue. An an anthocyanidin-binding site is contributed by His18. Asp111 (charge relay) is an active-site residue. Residues Ala346, Gln348, His363, Trp366, Ser368, and Glu371 each coordinate UDP-alpha-D-glucose. Residue Ala386 coordinates an anthocyanidin. Residues Glu387 and Gln388 each coordinate UDP-alpha-D-glucose.

It belongs to the UDP-glycosyltransferase family. In terms of tissue distribution, expressed in seedlings and roots.

The enzyme catalyses (E)-4-coumarate + UDP-alpha-D-glucose = 4-O-(beta-D-glucosyl)-trans-4-coumarate + UDP + H(+). The catalysed reaction is (E)-coniferol + UDP-alpha-D-glucose = 4-O-(beta-D-glucosyl)-(E)-coniferol + UDP + H(+). It catalyses the reaction (E)-sinapyl alcohol + UDP-alpha-D-glucose = 4-O-(beta-D-glucosyl)-trans-4-sinapoyl alcohol + UDP + H(+). It carries out the reaction (E)-sinapate + UDP-alpha-D-glucose = 4-O-(beta-D-glucosyl)-trans-sinapate + UDP + H(+). The enzyme catalyses (E)-coniferaldehyde + UDP-alpha-D-glucose = 4-O-(beta-D-glucosyl)-4-(E)-coniferyl aldehyde + UDP + H(+). The catalysed reaction is (E)-sinapaldehyde + UDP-alpha-D-glucose = 4-O-(beta-D-glucosyl)-4-trans-sinapoyl aldehyde + UDP + H(+). Functionally, involved in the O-glucosylation of monolignols (alcohol monomers of lignin). Glucosylates coniferyl alcohol to form coniferyl alcohol 4-O-glucoside. Glucosylates sinapyl alcohol to form sinapyl alcohol 4-O-glucoside. Glucosylates coniferyl aldehyde to form coniferyl aldehyde 4-O-glucoside. Glucosylates sinapyl aldehyde to form sinapyl aldehyde 4-O-glucoside. Possesses low activity with sinapate and ferulate as substrates. This chain is UDP-glycosyltransferase 72E2, found in Arabidopsis thaliana (Mouse-ear cress).